A 78-amino-acid polypeptide reads, in one-letter code: Large ribosomal subunit protein eL20 (78 aa).

This sequence belongs to the eukaryotic ribosomal protein eL20 family. As to quaternary structure, part of the 50S ribosomal subunit. Binds 23S rRNA.

In Pyrobaculum neutrophilum (strain DSM 2338 / JCM 9278 / NBRC 100436 / V24Sta) (Thermoproteus neutrophilus), this protein is Large ribosomal subunit protein eL20.